The primary structure comprises 416 residues: Nonsense-mediated decay protein 4 (416 aa).

3 disordered regions span residues 1–21, 195–218, and 356–393; these read MSLY…NYHD, QHPI…YNNS, and DRPS…ANGD. Positions 12 to 21 are enriched in basic and acidic residues; that stretch reads EARKNSNYHD. A compositionally biased stretch (basic residues) spans 360–375; the sequence is KSKNKNKNKNTKKSTK.

It is found in the cytoplasm. Functionally, involved in nonsense-mediated decay of mRNAs containing premature stop codons. The polypeptide is Nonsense-mediated decay protein 4 (NMD4) (Debaryomyces hansenii (strain ATCC 36239 / CBS 767 / BCRC 21394 / JCM 1990 / NBRC 0083 / IGC 2968) (Yeast)).